The sequence spans 551 residues: TRAF3-interacting JNK-activating modulator (551 aa).

Residues 1–526 (MISPDPRPSP…QLPPRRQCGR (526 aa)) lie on the Cytoplasmic side of the membrane. 2 disordered regions span residues 73-95 (LEEKGKAQHPQAREQGPSRRPGQ) and 140-178 (DHLSSQAGGLPPQDTPIKKPPKHHRGTQTKAEGPTIKND). 2 coiled-coil regions span residues 240–436 (DKLK…LLTK) and 464–506 (WDLR…RKLQ). A helical; Anchor for type IV membrane protein membrane pass occupies residues 527–544 (WLPVLMVVIAAALAVFLA). Residues 545-551 (NKDNLMI) lie on the Extracellular side of the membrane.

As to quaternary structure, interacts (via its coiled-coil domain) with TRAF3 (via isoleucine zipper). Interacts with MAP2K1. Interacts with PPP2CA; this interaction targets PPP2CA to the lysosomes. Interacts with TLR4. Interacts with MAVS. Interacts with TBK1.

It is found in the cell membrane. It localises to the golgi apparatus membrane. The protein resides in the lysosome membrane. The protein localises to the mitochondrion outer membrane. Adapter protein that plays essential roles in both innate and adaptive immunity. Plays a crucial role in the regulation of thymocyte development. Mechanistically, mediates TCR-stimulated activation through recruiting MAP2K1/MEK1 to the Golgi and, thereby, facilitating the interaction of MAP2K1/MEK1 with its activator BRAF. Also plays an essential role in regulatory T-cell stability and function by recruiting the serine-threonine phosphatase catalytic subunit (PPP2CA) to the lysosome, thereby facilitating the interaction of PP2Ac with the mTORC1 component RPTOR and restricting glycolytic metabolism. Positively regulates TLR4 signaling activity in macrophage-mediated inflammation by acting as a molecular clamp to facilitate LPS-induced translocation of TLR4 to lipid rafts. In response to viral infection, facilitates the recruitment of TRAF3 to MAVS within mitochondria leading to IRF3 activation and interferon production. However, participates in the maintenance of immune homeostasis and the prevention of overzealous innate immunity by promoting 'Lys-48'-dependent ubiquitination of TBK1. The chain is TRAF3-interacting JNK-activating modulator (TRAF3IP3) from Homo sapiens (Human).